Reading from the N-terminus, the 82-residue chain is Small ribosomal subunit protein eS27 (82 aa).

Cysteine 37, cysteine 40, cysteine 56, and cysteine 59 together coordinate Zn(2+).

The protein belongs to the eukaryotic ribosomal protein eS27 family. Component of the small ribosomal subunit. Mature ribosomes consist of a small (40S) and a large (60S) subunit. The 40S subunit contains about 32 different proteins and 1 molecule of RNA (18S). The 60S subunit contains 45 different proteins and 3 molecules of RNA (25S, 5.8S and 5S). The cofactor is Zn(2+).

It localises to the cytoplasm. Its function is as follows. Component of the ribosome, a large ribonucleoprotein complex responsible for the synthesis of proteins in the cell. The small ribosomal subunit (SSU) binds messenger RNAs (mRNAs) and translates the encoded message by selecting cognate aminoacyl-transfer RNA (tRNA) molecules. The large subunit (LSU) contains the ribosomal catalytic site termed the peptidyl transferase center (PTC), which catalyzes the formation of peptide bonds, thereby polymerizing the amino acids delivered by tRNAs into a polypeptide chain. The nascent polypeptides leave the ribosome through a tunnel in the LSU and interact with protein factors that function in enzymatic processing, targeting, and the membrane insertion of nascent chains at the exit of the ribosomal tunnel. The chain is Small ribosomal subunit protein eS27 (RPS27) from Candida albicans (strain SC5314 / ATCC MYA-2876) (Yeast).